Consider the following 963-residue polypeptide: Longitudinals lacking protein, isoforms J/P/Q/S/Z (963 aa).

The BTB domain maps to 32–97; sequence VDCTLAAEGK…MYRGEVNISQ (66 aa). Disordered regions lie at residues 115–200, 228–340, 447–469, and 482–520; these read LSDN…SSVL, SSGP…ASAS, DAQQRDPQDEAGQNEGGESRIRV, and GKSSDEPSDKLTQSKKSLISDAKTTNKTSTPIRPKVSTT. 4 stretches are compositionally biased toward low complexity: residues 162–175, 228–251, 263–293, and 329–340; these read SGDVSGSREGSSSP, SSGPAAGTSSQASSTQQQQPLTST, TSSTAAPASGASASAAVQQAHLHQQQAQTTS, and NSATGPNPASAS. A compositionally biased stretch (polar residues) spans 491-512; the sequence is KLTQSKKSLISDAKTTNKTSTP. A C2H2-type 1; degenerate zinc finger spans residues 849-871; that stretch reads WVCRNCNRTYKWKNSLKCHLKNE. A C2H2-type 2; degenerate zinc finger spans residues 878 to 901; that stretch reads YFCSKMCGYATNVHSNLKRHLNTK. The tract at residues 900–963 is disordered; sequence TKCRDREKDA…YTLVFQNDSA (64 aa). The span at 901–915 shows a compositional bias: basic and acidic residues; the sequence is KCRDREKDADDEKKP. Positions 937–953 are enriched in low complexity; sequence SSSNNNNNGGGSSTSST. The span at 954–963 shows a compositional bias: polar residues; it reads YTLVFQNDSA.

By stage 11, isoform Q, isoform P and isoform Z are expressed throughout the mesoderm. From stage 15, expression of isoform P expands to all tissues, whereas expression of isoform Z and isoform Q becomes restricted during later stages; starting from stage 14 to 16, isoform Z is expressed in muscle, and isoform Q and isoform Z are expressed in the CNS. For some isoforms, expression is also seen in specific types of cells in the embryo; isoform Z is expressed in the ventral furrow at stage 5, and isoform Q is expressed around the tracheal pits at stage 11. Isoform Z also shows transient enrichment in a dorsal cell layer in the CNS at stages 13 and 14.

The protein localises to the nucleus. Its function is as follows. Putative transcription factor required for axon growth and guidance in the central and peripheral nervous systems. Repels CNS axons away from the midline by promoting the expression of the midline repellent sli and its receptor robo. The polypeptide is Longitudinals lacking protein, isoforms J/P/Q/S/Z (Drosophila melanogaster (Fruit fly)).